Consider the following 167-residue polypeptide: Small ribosomal subunit protein uS5 (167 aa).

The region spanning 12–75 (LQEKLIAVNR…EKARRNIVTV (64 aa)) is the S5 DRBM domain.

This sequence belongs to the universal ribosomal protein uS5 family. In terms of assembly, part of the 30S ribosomal subunit. Contacts proteins S4 and S8.

With S4 and S12 plays an important role in translational accuracy. In terms of biological role, located at the back of the 30S subunit body where it stabilizes the conformation of the head with respect to the body. The sequence is that of Small ribosomal subunit protein uS5 from Shewanella baltica (strain OS223).